The following is a 116-amino-acid chain: Large ribosomal subunit protein bL20 (116 aa).

It belongs to the bacterial ribosomal protein bL20 family.

Binds directly to 23S ribosomal RNA and is necessary for the in vitro assembly process of the 50S ribosomal subunit. It is not involved in the protein synthesizing functions of that subunit. In Desulfosudis oleivorans (strain DSM 6200 / JCM 39069 / Hxd3) (Desulfococcus oleovorans), this protein is Large ribosomal subunit protein bL20.